We begin with the raw amino-acid sequence, 436 residues long: GTPase Obg (436 aa).

The 159-residue stretch at Ser-2–Leu-160 folds into the Obg domain. The OBG-type G domain maps to Ala-161–Asp-338. Residues Gly-167–Ser-174, Phe-192–Val-196, Asp-214–Gly-217, Asn-284–Asp-287, and Ser-319–Leu-321 contribute to the GTP site. Residues Ser-174 and Thr-194 each coordinate Mg(2+). In terms of domain architecture, OCT spans Gly-358–Asp-436.

This sequence belongs to the TRAFAC class OBG-HflX-like GTPase superfamily. OBG GTPase family. Monomer. Mg(2+) is required as a cofactor.

The protein resides in the cytoplasm. An essential GTPase which binds GTP, GDP and possibly (p)ppGpp with moderate affinity, with high nucleotide exchange rates and a fairly low GTP hydrolysis rate. Plays a role in control of the cell cycle, stress response, ribosome biogenesis and in those bacteria that undergo differentiation, in morphogenesis control. This is GTPase Obg from Streptococcus pneumoniae (strain CGSP14).